Consider the following 224-residue polypeptide: Probable mitochondrial import inner membrane translocase subunit Tim17 4 (224 aa).

3 helical membrane passes run 16–36 (CGCA…LKGF), 60–80 (AIAG…CVMV), and 115–135 (AFVG…VATI).

Belongs to the Tim17/Tim22/Tim23 family. As to quaternary structure, component of the TIM23 complex at least composed of Tim23, Tim17 (Tim17a1, Tim17a2 or Tim17b1) and a Tim50. The complex interacts with the Tim44 component of the PAM complex.

It localises to the mitochondrion inner membrane. Functionally, essential component of the TIM23 complex, a complex that mediates the translocation of transit peptide-containing proteins across the mitochondrial inner membrane. The sequence is that of Probable mitochondrial import inner membrane translocase subunit Tim17 4 (Tim17a2) from Drosophila melanogaster (Fruit fly).